Here is a 362-residue protein sequence, read N- to C-terminus: Phosphatidylserine decarboxylase proenzyme (362 aa).

Residues 26–44 form a helical membrane-spanning segment; the sequence is YLLTGVTILSFIFMFQYKY. Active-site charge relay system; for autoendoproteolytic cleavage activity residues include Asp-147, His-206, and Ser-316. Ser-316 serves as the catalytic Schiff-base intermediate with substrate; via pyruvic acid; for decarboxylase activity. Residue Ser-316 is modified to Pyruvic acid (Ser); by autocatalysis.

This sequence belongs to the phosphatidylserine decarboxylase family. PSD-B subfamily. Eukaryotic type I sub-subfamily. Heterodimer of a large membrane-associated beta subunit and a small pyruvoyl-containing alpha subunit. Requires pyruvate as cofactor. Is synthesized initially as an inactive proenzyme. Formation of the active enzyme involves a self-maturation process in which the active site pyruvoyl group is generated from an internal serine residue via an autocatalytic post-translational modification. Two non-identical subunits are generated from the proenzyme in this reaction, and the pyruvate is formed at the N-terminus of the alpha chain, which is derived from the carboxyl end of the proenzyme. The autoendoproteolytic cleavage occurs by a canonical serine protease mechanism, in which the side chain hydroxyl group of the serine supplies its oxygen atom to form the C-terminus of the beta chain, while the remainder of the serine residue undergoes an oxidative deamination to produce ammonia and the pyruvoyl prosthetic group on the alpha chain. During this reaction, the Ser that is part of the protease active site of the proenzyme becomes the pyruvoyl prosthetic group, which constitutes an essential element of the active site of the mature decarboxylase.

The protein localises to the endoplasmic reticulum membrane. It catalyses the reaction a 1,2-diacyl-sn-glycero-3-phospho-L-serine + H(+) = a 1,2-diacyl-sn-glycero-3-phosphoethanolamine + CO2. Its pathway is phospholipid metabolism; phosphatidylethanolamine biosynthesis; phosphatidylethanolamine from CDP-diacylglycerol: step 2/2. Catalyzes the formation of phosphatidylethanolamine (PtdEtn) from phosphatidylserine (PtdSer). Plays a central role in phospholipid metabolism and in the interorganelle trafficking of phosphatidylserine. This chain is Phosphatidylserine decarboxylase proenzyme, found in Plasmodium falciparum.